The chain runs to 302 residues: MVPSSKAVVFARQMAKQIRVTTPSMSATRFLSTGDNGQVDEQQNPPEPLPNRPLRGERSSNSHREPPARQAHNLGKSDTTLSDDGFLEQFKLGVNQDSRETPKPEQYPQEPLPPPEDSDEIFKKMKEGGLIPNAVAMLDGLCKDGLVQEAMKLFGLMRDKGTIPEVVIYTAVVEAFCKAHKIEDAKRIFRKMQNNGIAPNAFSYGVLVQGLYNCNMLDDAVAFCSEMLESGHSPNVPTFVELVDALCRVKGVEQAQSAIDTLNQKGFAVNVKAVKEFMDKRAPFPSLAWEAIFKKKPTEKPF.

Positions 26 to 40 (SATRFLSTGDNGQVD) are enriched in polar residues. Disordered stretches follow at residues 26–82 (SATR…TTLS) and 94–116 (VNQD…PPPE). A compositionally biased stretch (basic and acidic residues) spans 54–67 (LRGERSSNSHREPP). PPR repeat units follow at residues 130–164 (LIPN…GTIP), 165–199 (EVVI…GIAP), 200–234 (NAFS…GHSP), and 235–269 (NVPT…GFAV).

The protein belongs to the PPR family. P subfamily.

The sequence is that of Pentatricopeptide repeat-containing protein At4g38150 from Arabidopsis thaliana (Mouse-ear cress).